The primary structure comprises 370 residues: Probable phosphoserine aminotransferase (370 aa).

L-glutamate is bound at residue Arg-45. Residues 79–80, Trp-105, Thr-154, Asp-175, and Gln-198 contribute to the pyridoxal 5'-phosphate site; that span reads GT. The residue at position 199 (Lys-199) is an N6-(pyridoxal phosphate)lysine. Position 240 to 241 (240 to 241) interacts with pyridoxal 5'-phosphate; the sequence is NT.

This sequence belongs to the class-V pyridoxal-phosphate-dependent aminotransferase family. SerC subfamily. As to quaternary structure, homodimer. Pyridoxal 5'-phosphate is required as a cofactor.

It carries out the reaction O-phospho-L-serine + 2-oxoglutarate = 3-phosphooxypyruvate + L-glutamate. It catalyses the reaction 4-(phosphooxy)-L-threonine + 2-oxoglutarate = (R)-3-hydroxy-2-oxo-4-phosphooxybutanoate + L-glutamate. The protein operates within amino-acid biosynthesis; L-serine biosynthesis; L-serine from 3-phospho-D-glycerate: step 2/3. Its pathway is cofactor biosynthesis; pyridoxine 5'-phosphate biosynthesis; pyridoxine 5'-phosphate from D-erythrose 4-phosphate: step 3/5. In terms of biological role, catalyzes the reversible conversion of 3-phosphohydroxypyruvate to phosphoserine and of 3-hydroxy-2-oxo-4-phosphonooxybutanoate to phosphohydroxythreonine. The sequence is that of Probable phosphoserine aminotransferase from Caenorhabditis elegans.